The sequence spans 687 residues: Putative lipase YDR444W (687 aa).

The Charge relay system role is filled by serine 284. 3 disordered regions span residues 429–472 (IRKK…AESP), 491–513 (KINK…EQGV), and 650–687 (ELAE…ENAT). A compositionally biased stretch (low complexity) spans 436 to 463 (SPTSSEFVSSDSPESSGASSPSNENGNN). A compositionally biased stretch (basic and acidic residues) spans 670–681 (RSNEYNEGEISK).

The protein belongs to the putative lipase ROG1 family.

Its subcellular location is the cytoplasm. The polypeptide is Putative lipase YDR444W (Saccharomyces cerevisiae (strain ATCC 204508 / S288c) (Baker's yeast)).